Reading from the N-terminus, the 436-residue chain is Glutamyl-tRNA reductase (436 aa).

Substrate contacts are provided by residues 49–52 (TCNR), serine 109, 114–116 (EPQ), and glutamine 120. The Nucleophile role is filled by cysteine 50. An NADP(+)-binding site is contributed by 189–194 (GAGEMC).

It belongs to the glutamyl-tRNA reductase family. Homodimer.

It catalyses the reaction (S)-4-amino-5-oxopentanoate + tRNA(Glu) + NADP(+) = L-glutamyl-tRNA(Glu) + NADPH + H(+). It participates in porphyrin-containing compound metabolism; protoporphyrin-IX biosynthesis; 5-aminolevulinate from L-glutamyl-tRNA(Glu): step 1/2. In terms of biological role, catalyzes the NADPH-dependent reduction of glutamyl-tRNA(Glu) to glutamate 1-semialdehyde (GSA). This Pelobacter propionicus (strain DSM 2379 / NBRC 103807 / OttBd1) protein is Glutamyl-tRNA reductase.